A 127-amino-acid polypeptide reads, in one-letter code: Large ribosomal subunit protein bL20c (127 aa).

This sequence belongs to the bacterial ribosomal protein bL20 family.

It is found in the plastid. Its subcellular location is the chloroplast. In terms of biological role, binds directly to 23S ribosomal RNA and is necessary for the in vitro assembly process of the 50S ribosomal subunit. It is not involved in the protein synthesizing functions of that subunit. This is Large ribosomal subunit protein bL20c from Jasminum nudiflorum (Winter jasmine).